Here is a 243-residue protein sequence, read N- to C-terminus: uncharacterized protein (243 aa).

Residues 55–75 traverse the membrane as a helical segment; sequence IILIILLTIFMVISTLVIAFV.

Its subcellular location is the membrane. This is an uncharacterized protein from Rickettsia prowazekii (strain Madrid E).